Here is a 542-residue protein sequence, read N- to C-terminus: Chaperonin GroEL (542 aa).

Residues 29 to 32 (TLGP), 86 to 90 (DGTTT), G413, 476 to 478 (NAA), and D492 contribute to the ATP site. Positions 521–542 (QPDENGPAAGPDMGMGGMGGMM) are disordered. Residues 533–542 (MGMGGMGGMM) show a composition bias toward gly residues.

Belongs to the chaperonin (HSP60) family. In terms of assembly, forms a cylinder of 14 subunits composed of two heptameric rings stacked back-to-back. Interacts with the co-chaperonin GroES.

It localises to the cytoplasm. The catalysed reaction is ATP + H2O + a folded polypeptide = ADP + phosphate + an unfolded polypeptide.. Its function is as follows. Together with its co-chaperonin GroES, plays an essential role in assisting protein folding. The GroEL-GroES system forms a nano-cage that allows encapsulation of the non-native substrate proteins and provides a physical environment optimized to promote and accelerate protein folding. The polypeptide is Chaperonin GroEL (Listeria innocua serovar 6a (strain ATCC BAA-680 / CLIP 11262)).